Here is a 593-residue protein sequence, read N- to C-terminus: Cyclin-dependent kinase-like 3 (593 aa).

Residues 4 to 286 (YETLGKVGEG…STDLLHHDYF (283 aa)) form the Protein kinase domain. ATP is bound by residues 10–18 (VGEGSYGTV) and lysine 33. The short motif at 45–51 (KIATREI) is the [NKR]KIAxRE element. Aspartate 125 serves as the catalytic Proton acceptor. Threonine 158 carries the phosphothreonine modification. Tyrosine 160 bears the Phosphotyrosine mark. A compositionally biased stretch (basic and acidic residues) spans 368-403 (GKGDVPDLKKTESEGEHRQQGTAEDTHPTSLDRKPS). A disordered region spans residues 368–512 (GKGDVPDLKK…NDQIASGNKR (145 aa)). The span at 436-452 (NLTSSNLLAANPSSNLS) shows a compositional bias: low complexity. 2 stretches are compositionally biased toward polar residues: residues 468 to 491 (SSQT…QVQT) and 499 to 508 (RTGQNDQIAS).

The protein belongs to the protein kinase superfamily. CMGC Ser/Thr protein kinase family. CDC2/CDKX subfamily. In terms of tissue distribution, highly expressed in brain, and to a lower extent in heart and testis.

It localises to the nucleus. Its subcellular location is the cytoplasm. The catalysed reaction is L-seryl-[protein] + ATP = O-phospho-L-seryl-[protein] + ADP + H(+). The enzyme catalyses L-threonyl-[protein] + ATP = O-phospho-L-threonyl-[protein] + ADP + H(+). This is Cyclin-dependent kinase-like 3 from Rattus norvegicus (Rat).